The primary structure comprises 258 residues: ATP synthase subunit a (258 aa).

Transmembrane regions (helical) follow at residues lysine 38–alanine 58, tryptophan 94–phenylalanine 114, tyrosine 118–threonine 138, isoleucine 193–proline 213, and alanine 215–isoleucine 235.

Belongs to the ATPase A chain family. In terms of assembly, F-type ATPases have 2 components, CF(1) - the catalytic core - and CF(0) - the membrane proton channel. CF(1) has five subunits: alpha(3), beta(3), gamma(1), delta(1), epsilon(1). CF(0) has three main subunits: a(1), b(2) and c(9-12). The alpha and beta chains form an alternating ring which encloses part of the gamma chain. CF(1) is attached to CF(0) by a central stalk formed by the gamma and epsilon chains, while a peripheral stalk is formed by the delta and b chains.

Its subcellular location is the cell membrane. In terms of biological role, key component of the proton channel; it plays a direct role in the translocation of protons across the membrane. In Rubrobacter xylanophilus (strain DSM 9941 / JCM 11954 / NBRC 16129 / PRD-1), this protein is ATP synthase subunit a.